The sequence spans 448 residues: Methylenetetrahydrofolate--tRNA-(uracil-5-)-methyltransferase TrmFO (448 aa).

Position 10–15 (10–15) interacts with FAD; sequence GAGLAG.

The protein belongs to the MnmG family. TrmFO subfamily. Requires FAD as cofactor.

Its subcellular location is the cytoplasm. It catalyses the reaction uridine(54) in tRNA + (6R)-5,10-methylene-5,6,7,8-tetrahydrofolate + NADH + H(+) = 5-methyluridine(54) in tRNA + (6S)-5,6,7,8-tetrahydrofolate + NAD(+). The enzyme catalyses uridine(54) in tRNA + (6R)-5,10-methylene-5,6,7,8-tetrahydrofolate + NADPH + H(+) = 5-methyluridine(54) in tRNA + (6S)-5,6,7,8-tetrahydrofolate + NADP(+). Catalyzes the folate-dependent formation of 5-methyl-uridine at position 54 (M-5-U54) in all tRNAs. The protein is Methylenetetrahydrofolate--tRNA-(uracil-5-)-methyltransferase TrmFO of Lactococcus lactis subsp. cremoris (strain SK11).